The primary structure comprises 491 residues: Protein nucleotidyltransferase YdiU (491 aa).

Residues Gly-94, Gly-96, Arg-97, Lys-117, Asp-129, Gly-130, Arg-180, and Arg-187 each contribute to the ATP site. Asp-256 serves as the catalytic Proton acceptor. Mg(2+) is bound by residues Asn-257 and Asp-266. Asp-266 provides a ligand contact to ATP.

Belongs to the SELO family. It depends on Mg(2+) as a cofactor. The cofactor is Mn(2+).

The enzyme catalyses L-seryl-[protein] + ATP = 3-O-(5'-adenylyl)-L-seryl-[protein] + diphosphate. It carries out the reaction L-threonyl-[protein] + ATP = 3-O-(5'-adenylyl)-L-threonyl-[protein] + diphosphate. It catalyses the reaction L-tyrosyl-[protein] + ATP = O-(5'-adenylyl)-L-tyrosyl-[protein] + diphosphate. The catalysed reaction is L-histidyl-[protein] + UTP = N(tele)-(5'-uridylyl)-L-histidyl-[protein] + diphosphate. The enzyme catalyses L-seryl-[protein] + UTP = O-(5'-uridylyl)-L-seryl-[protein] + diphosphate. It carries out the reaction L-tyrosyl-[protein] + UTP = O-(5'-uridylyl)-L-tyrosyl-[protein] + diphosphate. Its function is as follows. Nucleotidyltransferase involved in the post-translational modification of proteins. It can catalyze the addition of adenosine monophosphate (AMP) or uridine monophosphate (UMP) to a protein, resulting in modifications known as AMPylation and UMPylation. The sequence is that of Protein nucleotidyltransferase YdiU from Clostridium botulinum (strain 657 / Type Ba4).